The primary structure comprises 307 residues: Pseudouridine-5'-phosphate glycosidase (307 aa).

The active-site Proton donor is Glu-28. Residues Lys-89 and Val-109 each coordinate substrate. Position 141 (Asp-141) interacts with Mn(2+). 143-145 contributes to the substrate binding site; the sequence is SAD. Residue Lys-162 is the Nucleophile of the active site.

It belongs to the pseudouridine-5'-phosphate glycosidase family. Homotrimer. Requires Mn(2+) as cofactor.

It catalyses the reaction D-ribose 5-phosphate + uracil = psi-UMP + H2O. Functionally, catalyzes the reversible cleavage of pseudouridine 5'-phosphate (PsiMP) to ribose 5-phosphate and uracil. Functions biologically in the cleavage direction, as part of a pseudouridine degradation pathway. This is Pseudouridine-5'-phosphate glycosidase from Alkaliphilus metalliredigens (strain QYMF).